Reading from the N-terminus, the 433-residue chain is Trigger factor (433 aa).

The PPIase FKBP-type domain occupies 161-246 (GDRVTMDFVG…AKKVEARDLP (86 aa)).

This sequence belongs to the FKBP-type PPIase family. Tig subfamily.

Its subcellular location is the cytoplasm. It carries out the reaction [protein]-peptidylproline (omega=180) = [protein]-peptidylproline (omega=0). Functionally, involved in protein export. Acts as a chaperone by maintaining the newly synthesized protein in an open conformation. Functions as a peptidyl-prolyl cis-trans isomerase. In Idiomarina loihiensis (strain ATCC BAA-735 / DSM 15497 / L2-TR), this protein is Trigger factor.